Reading from the N-terminus, the 318-residue chain is MASKTYTLNTGAKIPAVGFGTFANEGAKGETYAAVTKALDVGYRHLDCAWFYHNEDEVGDAVRDFLARRPDVKREDLFICTKVWNHLHEPEDVKWSAKNSCENLKVDYIDLFLVHWPIAAEKNSDRSVKLGPDGKYVINQALTENPEPTWRAMEELVESGLVKAIGVSNWTIPGLKKLLQIAKIKPAVNQIEIHPFLPNEELVAFCFENGILPEAYSPLGSQNQVPSTGERVRDNPTLKAVAERSGYSLAQILLAWGLKRGYVVLPKSSTPSRIESNFNIPELSDEDFEAIQQVAKGRHTRFVNMKDTFGYNVWPEEE.

The active-site Proton donor is Tyr-52. Position 115 (His-115) interacts with substrate. 217–277 (SPLGSQNQVP…SSTPSRIESN (61 aa)) provides a ligand contact to NADP(+).

It belongs to the aldo/keto reductase family.

It catalyses the reaction glycerol + NADP(+) = dihydroxyacetone + NADPH + H(+). Glycerol oxidoreductase probably involved in glycerol synthesis. The chain is Glycerol 2-dehydrogenase (NADP(+)) (gld2) from Hypocrea jecorina (Trichoderma reesei).